The primary structure comprises 547 residues: Malolactic enzyme (547 aa).

The active-site Proton donor is Tyr-92. The active-site Proton acceptor is Lys-165. Lys-165 is a substrate binding site. Positions 236, 237, and 260 each coordinate Mn(2+). NAD(+) is bound by residues 293-296 (AGTA), Asn-405, and Asn-450. Substrate is bound at residue Asn-450.

This sequence belongs to the malic enzymes family. In terms of assembly, homodimer. Requires Mn(2+) as cofactor. NAD(+) serves as cofactor.

It catalyses the reaction (S)-malate + H(+) = (S)-lactate + CO2. Its function is as follows. Involved in the malolactic fermentation (MLF) of wine, which results in a natural decrease in acidity and favorable changes in wine flavors. Catalyzes the decarboxylation of L-malate to L-lactate. This Lactiplantibacillus plantarum (strain ATCC BAA-793 / NCIMB 8826 / WCFS1) (Lactobacillus plantarum) protein is Malolactic enzyme.